A 705-amino-acid polypeptide reads, in one-letter code: Ion-translocating oxidoreductase complex subunit C (705 aa).

2 consecutive 4Fe-4S ferredoxin-type domains span residues 368-397 and 407-435; these read MGETPEEQGCIRCSACADACPADLLPQQLY and KATAHNIADCIECGACAWVCPSSIPLVQY. [4Fe-4S] cluster-binding residues include Cys377, Cys380, Cys383, Cys387, Cys416, Cys419, Cys422, and Cys426. The disordered stretch occupies residues 536 to 684; it reads RARQAENIPA…EPVDPRKAAV (149 aa).

This sequence belongs to the 4Fe4S bacterial-type ferredoxin family. RnfC subfamily. The complex is composed of six subunits: RnfA, RnfB, RnfC, RnfD, RnfE and RnfG. [4Fe-4S] cluster serves as cofactor.

It localises to the cell inner membrane. In terms of biological role, part of a membrane-bound complex that couples electron transfer with translocation of ions across the membrane. This chain is Ion-translocating oxidoreductase complex subunit C, found in Citrobacter koseri (strain ATCC BAA-895 / CDC 4225-83 / SGSC4696).